The primary structure comprises 255 residues: Thiazole synthase (255 aa).

The Schiff-base intermediate with DXP role is filled by K96. 1-deoxy-D-xylulose 5-phosphate is bound by residues G157, 183-184, and 205-206; these read AG and NT.

The protein belongs to the ThiG family. Homotetramer. Forms heterodimers with either ThiH or ThiS.

The protein localises to the cytoplasm. It carries out the reaction [ThiS sulfur-carrier protein]-C-terminal-Gly-aminoethanethioate + 2-iminoacetate + 1-deoxy-D-xylulose 5-phosphate = [ThiS sulfur-carrier protein]-C-terminal Gly-Gly + 2-[(2R,5Z)-2-carboxy-4-methylthiazol-5(2H)-ylidene]ethyl phosphate + 2 H2O + H(+). Its pathway is cofactor biosynthesis; thiamine diphosphate biosynthesis. Catalyzes the rearrangement of 1-deoxy-D-xylulose 5-phosphate (DXP) to produce the thiazole phosphate moiety of thiamine. Sulfur is provided by the thiocarboxylate moiety of the carrier protein ThiS. In vitro, sulfur can be provided by H(2)S. In Bacillus licheniformis (strain ATCC 14580 / DSM 13 / JCM 2505 / CCUG 7422 / NBRC 12200 / NCIMB 9375 / NCTC 10341 / NRRL NRS-1264 / Gibson 46), this protein is Thiazole synthase.